A 334-amino-acid chain; its full sequence is Glyceraldehyde-3-phosphate dehydrogenase (334 aa).

NAD(+) is bound by residues 12 to 13 (TI) and Gly111. 140–142 (SCN) provides a ligand contact to D-glyceraldehyde 3-phosphate. The active-site Nucleophile is Cys141. Position 167 (Arg167) interacts with NAD(+). 192 to 193 (HG) contacts D-glyceraldehyde 3-phosphate. Gln298 provides a ligand contact to NAD(+).

This sequence belongs to the glyceraldehyde-3-phosphate dehydrogenase family. In terms of assembly, homotetramer.

It localises to the cytoplasm. It catalyses the reaction D-glyceraldehyde 3-phosphate + phosphate + NADP(+) = (2R)-3-phospho-glyceroyl phosphate + NADPH + H(+). The catalysed reaction is D-glyceraldehyde 3-phosphate + phosphate + NAD(+) = (2R)-3-phospho-glyceroyl phosphate + NADH + H(+). It participates in carbohydrate degradation; glycolysis; pyruvate from D-glyceraldehyde 3-phosphate: step 1/5. In Thermococcus kodakarensis (strain ATCC BAA-918 / JCM 12380 / KOD1) (Pyrococcus kodakaraensis (strain KOD1)), this protein is Glyceraldehyde-3-phosphate dehydrogenase.